Here is a 398-residue protein sequence, read N- to C-terminus: Probable RNA methyltransferase sce1580 (398 aa).

A disordered region spans residues 1–24 (MRVPEIPEETASPLRAGDPPAQVA). Residue Glu140 is the Proton acceptor of the active site. The Radical SAM core domain occupies 146 to 378 (GPARTTLCVS…TLVRRPRGRD (233 aa)). An intrachain disulfide couples Cys153 to Cys383. 3 residues coordinate [4Fe-4S] cluster: Cys160, Cys164, and Cys167. S-adenosyl-L-methionine contacts are provided by residues 211–212 (GE), Ser243, 265–267 (SLN), and Asn340. Cys383 acts as the S-methylcysteine intermediate in catalysis.

It belongs to the radical SAM superfamily. RlmN family. [4Fe-4S] cluster serves as cofactor.

The protein resides in the cytoplasm. The protein is Probable RNA methyltransferase sce1580 of Sorangium cellulosum (strain So ce56) (Polyangium cellulosum (strain So ce56)).